We begin with the raw amino-acid sequence, 464 residues long: Cysteine--tRNA ligase (464 aa).

Cys-28 provides a ligand contact to Zn(2+). The 'HIGH' region motif lies at 30-40 (PTVYDHSHIGH). Residues Cys-205, His-230, and Glu-234 each coordinate Zn(2+). Positions 263 to 267 (KMSKS) match the 'KMSKS' region motif. Position 266 (Lys-266) interacts with ATP.

It belongs to the class-I aminoacyl-tRNA synthetase family. Zn(2+) is required as a cofactor.

It is found in the cytoplasm. It carries out the reaction tRNA(Cys) + L-cysteine + ATP = L-cysteinyl-tRNA(Cys) + AMP + diphosphate. The chain is Cysteine--tRNA ligase from Ignicoccus hospitalis (strain KIN4/I / DSM 18386 / JCM 14125).